The following is a 485-amino-acid chain: MFDALAERLEQAWTKLRGQDKISESNVQEALKEVRRALLEADVNLGVVKEFIAQVQEKAVGTQVISGIRPDQQFIKVVYDELVQVMGETHVPLAQAAKAPTVILMAGLQGAGKTTATAKLALHLRKEGRSTLLVATDVYRPAAIDQLITLGKQIDVPVFELGSDANPVEIARQGVEKARQEGIDTVIVDTAGRLQIDTEMMEELAQVKEAIAPHEVLLVVDSMIGQEAASLTRSFHERIGITGAILTKLDGDSRGGAALSIRRVSGQPIKFVGLGEKVEALQPFHPERMASRILGMGDVLTLVEKAQEEIDLADVEKMQEKILAAKFDFTDFLKQMRLLKNMGSLAGFIKLIPGLGGKINDEQLRQGERQLKRVEAMINSMTPQERRDPDLLSNSPSRRHRIAKGCGQTEAEIRQIIQQFQQMRTMMQQMSQGGFPGMGGMGMPGFGGGMPGFGGGAPAPQPGFRGYGPPKKQKKGSKKKKGFGL.

GTP contacts are provided by residues 107–114 (GLQGAGKT), 189–193 (DTAGR), and 247–250 (TKLD). The interval 452–485 (GFGGGAPAPQPGFRGYGPPKKQKKGSKKKKGFGL) is disordered. Residues 471–485 (KKQKKGSKKKKGFGL) are compositionally biased toward basic residues.

It belongs to the GTP-binding SRP family. SRP54 subfamily. As to quaternary structure, part of the signal recognition particle protein translocation system, which is composed of SRP and FtsY.

Its subcellular location is the cytoplasm. It carries out the reaction GTP + H2O = GDP + phosphate + H(+). In terms of biological role, involved in targeting and insertion of nascent membrane proteins into the cytoplasmic membrane. Binds to the hydrophobic signal sequence of the ribosome-nascent chain (RNC) as it emerges from the ribosomes. The SRP-RNC complex is then targeted to the cytoplasmic membrane where it interacts with the SRP receptor FtsY. The polypeptide is Signal recognition particle protein (Synechococcus elongatus (strain ATCC 33912 / PCC 7942 / FACHB-805) (Anacystis nidulans R2)).